Here is a 150-residue protein sequence, read N- to C-terminus: FAD synthase (150 aa).

ATP is bound by residues 11–12 (TF), 16–19 (HPGH), Asp96, and Tyr124.

It belongs to the archaeal FAD synthase family. Homodimer. The cofactor is a divalent metal cation.

It carries out the reaction FMN + ATP + H(+) = FAD + diphosphate. It functions in the pathway cofactor biosynthesis; FAD biosynthesis; FAD from FMN: step 1/1. In terms of biological role, catalyzes the transfer of the AMP portion of ATP to flavin mononucleotide (FMN) to produce flavin adenine dinucleotide (FAD) coenzyme. In Methanococcus maripaludis (strain C7 / ATCC BAA-1331), this protein is FAD synthase.